Consider the following 129-residue polypeptide: Calcitonin gene-related peptide 2 (129 aa).

The signal sequence occupies residues 1 to 25 (MGFGKPSSFLAFSILVLCQAGSLQA). Residues 26-81 (QPLRSSLESLPDPAALSEKEGRLLLAALVKAYVQRKTNELEQEQEQEMEGSSLTAQ) constitute a propeptide that is removed on maturation. C85 and C90 are joined by a disulfide. F120 carries the phenylalanine amide modification. Positions 126–129 (DLQA) are excised as a propeptide.

This sequence belongs to the calcitonin family.

Its subcellular location is the secreted. Functionally, CALCB/CGRP2 is a peptide hormone that induces vasodilation mediated by the CALCRL-RAMP1 receptor complex. Dilates a variety of vessels including the coronary, cerebral and systemic vasculature. Its abundance in the CNS also points toward a neurotransmitter or neuromodulator role. This is Calcitonin gene-related peptide 2 (CALCB) from Equus caballus (Horse).